A 409-amino-acid polypeptide reads, in one-letter code: Casein kinase I isoform delta-B (409 aa).

Positions 9-277 (YRLGRKIGSG…YLRQLFRNLF (269 aa)) constitute a Protein kinase domain. ATP contacts are provided by residues 15–23 (IGSGSFGDI) and Lys-38. Residue Asp-128 is the Proton acceptor of the active site. Positions 300 to 315 (TAEEADRERRERDERM) are enriched in basic and acidic residues. Residues 300–409 (TAEEADRERR…NSIPFDHHGK (110 aa)) are disordered. Positions 317–341 (HSRNPAARGIPAASGRPRPTQDGAP) are autoinhibitory. 2 stretches are compositionally biased toward polar residues: residues 346-358 (TPTSHTANTSSPR) and 380-402 (NVSSSDLTGRQDTSRMSTSQNSI).

The protein belongs to the protein kinase superfamily. In terms of assembly, monomer. Interacts with per1 and per2. Component of the circadian core oscillator. In terms of processing, autophosphorylated on serine and threonine residues.

Its subcellular location is the cytoplasm. It is found in the nucleus. It carries out the reaction L-seryl-[protein] + ATP = O-phospho-L-seryl-[protein] + ADP + H(+). It catalyses the reaction L-threonyl-[protein] + ATP = O-phospho-L-threonyl-[protein] + ADP + H(+). Exhibits substrate-dependent heparin activation. Functionally, casein kinases are operationally defined by their preferential utilization of acidic proteins such as caseins as substrates. Central component of the circadian clock. May act as a negative regulator of circadian rhythmicity by phosphorylating per1 and per2, which may lead to their degradation. Participates in wnt signaling. The polypeptide is Casein kinase I isoform delta-B (csnk1db) (Danio rerio (Zebrafish)).